A 919-amino-acid chain; its full sequence is Protein phosphatase 1 regulatory subunit 37 (919 aa).

LRR repeat units follow at residues 340 to 361, 368 to 388, 396 to 417, 425 to 445, 454 to 474, and 482 to 502; these read SLQYLDARNTPLLDHSAPFVAR, SLTVLHLENSGISGRPLMLLA, NLRELYLAENKLNGLQDSAQLG, NIQILDLRNNHILDSGLAYVC, GLVTLVLWNNQLTHNGMGYLA, and SLETLNLGHNAVGNEGVHKLK. Disordered stretches follow at residues 626–716 and 790–866; these read ATED…TIPS and APSQ…APLP. Positions 631 to 640 are enriched in acidic residues; the sequence is THEEEEEEEA. Residues 641-658 are compositionally biased toward basic and acidic residues; it reads SPLKKIEEETTDALKDAT. A compositionally biased stretch (acidic residues) spans 677-690; the sequence is PQDDSDSDTEDEET. The span at 691 to 701 shows a compositional bias: low complexity; it reads PTNTSLTSTSP. Polar residues-rich tracts occupy residues 791 to 801 and 811 to 837; these read PSQTQNSTQPT and DAQQEDSVSTSTPSLDANIDQTQLTES. The stretch at 833–861 forms a coiled coil; it reads QLTESVSEEEQKKAETLNNEADINEDANT.

Belongs to the PPP1R37 family.

May inhibit phosphatase activity of protein phosphatase 1 (PP1) complexes. The chain is Protein phosphatase 1 regulatory subunit 37 (ppp1r37) from Danio rerio (Zebrafish).